Here is a 273-residue protein sequence, read N- to C-terminus: Outer surface protein A (273 aa).

The signal sequence occupies residues 1–16; that stretch reads MKKYLLGIGLILALIA. The N-palmitoyl cysteine moiety is linked to residue Cys-17. A lipid anchor (S-diacylglycerol cysteine) is attached at Cys-17.

This sequence belongs to the OspA lipoprotein family.

The protein resides in the cell outer membrane. Its subcellular location is the cell surface. The polypeptide is Outer surface protein A (Borreliella burgdorferi (Lyme disease spirochete)).